The chain runs to 307 residues: NADH-ubiquinone oxidoreductase chain 2 (307 aa).

Helical transmembrane passes span 1-21 (MTLQ…LSMT), 25-45 (WIII…YYML), 58-78 (YFLI…YIFV), 88-108 (FIFI…FWII), 119-139 (IGIV…HMGC), 144-164 (MLNL…LIGM), 193-213 (LFKY…FLYL), 217-237 (MSIS…LFIG), 250-270 (LWFI…VYYL), and 287-307 (HYKM…LFLT).

This sequence belongs to the complex I subunit 2 family.

The protein localises to the mitochondrion inner membrane. It carries out the reaction a ubiquinone + NADH + 5 H(+)(in) = a ubiquinol + NAD(+) + 4 H(+)(out). Functionally, core subunit of the mitochondrial membrane respiratory chain NADH dehydrogenase (Complex I) that is believed to belong to the minimal assembly required for catalysis. Complex I functions in the transfer of electrons from NADH to the respiratory chain. The immediate electron acceptor for the enzyme is believed to be ubiquinone. The chain is NADH-ubiquinone oxidoreductase chain 2 (ND2) from Albinaria caerulea (Land snail).